Reading from the N-terminus, the 382-residue chain is uncharacterized protein (382 aa).

The next 12 helical transmembrane spans lie at 14-34 (GLLL…LWLA), 45-65 (VVSS…GYVI), 79-99 (FIFA…SWLA), 102-122 (FVAG…LMCS), 131-151 (LLAA…LLVS), 157-177 (LMSV…PLLF), 204-224 (LGVN…GLMP), 235-255 (ASIG…QWPI), 270-290 (VQVF…AMAP), 291-311 (ALFI…AWAC), 325-345 (ALLL…AMLM), and 348-368 (FSDN…LLML).

It belongs to the major facilitator superfamily. YcaD (TC 2.A.1.26) family.

It localises to the cell inner membrane. This is an uncharacterized protein from Shigella sonnei (strain Ss046).